The chain runs to 269 residues: NAD-capped RNA hydrolase NudC (269 aa).

Arg-74 is a binding site for substrate. Zn(2+) is bound by residues Cys-103, Cys-106, Cys-121, and Cys-124. Tyr-129 lines the substrate pocket. Positions 130–253 (PRIFPCIIVA…TIARQLIENT (124 aa)) constitute a Nudix hydrolase domain. The a divalent metal cation site is built by Ala-163, Glu-179, and Glu-183. The Nudix box motif lies at 164 to 185 (GFLEVGETLEQCVAREVKEETG). 197-204 (QPWAFPSS) lines the substrate pocket. Glu-224 is a binding site for a divalent metal cation. Substrate is bound at residue Ala-246.

Belongs to the Nudix hydrolase family. NudC subfamily. Homodimer. Mg(2+) is required as a cofactor. The cofactor is Mn(2+). Requires Zn(2+) as cofactor.

The enzyme catalyses a 5'-end NAD(+)-phospho-ribonucleoside in mRNA + H2O = a 5'-end phospho-adenosine-phospho-ribonucleoside in mRNA + beta-nicotinamide D-ribonucleotide + 2 H(+). The catalysed reaction is NAD(+) + H2O = beta-nicotinamide D-ribonucleotide + AMP + 2 H(+). It carries out the reaction NADH + H2O = reduced beta-nicotinamide D-ribonucleotide + AMP + 2 H(+). In terms of biological role, mRNA decapping enzyme that specifically removes the nicotinamide adenine dinucleotide (NAD) cap from a subset of mRNAs by hydrolyzing the diphosphate linkage to produce nicotinamide mononucleotide (NMN) and 5' monophosphate mRNA. The NAD-cap is present at the 5'-end of some mRNAs and stabilizes RNA against 5'-processing. Has preference for mRNAs with a 5'-end purine. Catalyzes the hydrolysis of a broad range of dinucleotide pyrophosphates. In Vibrio atlanticus (strain LGP32) (Vibrio splendidus (strain Mel32)), this protein is NAD-capped RNA hydrolase NudC.